We begin with the raw amino-acid sequence, 689 residues long: Glycine--tRNA ligase beta subunit (689 aa).

It belongs to the class-II aminoacyl-tRNA synthetase family. Tetramer of two alpha and two beta subunits.

The protein localises to the cytoplasm. The catalysed reaction is tRNA(Gly) + glycine + ATP = glycyl-tRNA(Gly) + AMP + diphosphate. This Pectobacterium carotovorum subsp. carotovorum (strain PC1) protein is Glycine--tRNA ligase beta subunit.